The primary structure comprises 44 residues: Protein PsbN (44 aa).

A helical transmembrane segment spans residues 6 to 26 (FFFTIFLWFFLLSITAYSIYV).

The protein belongs to the PsbN family.

Its subcellular location is the plastid. It localises to the chloroplast thylakoid membrane. Its function is as follows. May play a role in photosystem I and II biogenesis. This chain is Protein PsbN, found in Stigeoclonium helveticum (Green alga).